A 182-amino-acid polypeptide reads, in one-letter code: CDP-diacylglycerol--glycerol-3-phosphate 3-phosphatidyltransferase (182 aa).

The Cytoplasmic segment spans residues 1-12 (MQLNIPTWLTLF). A helical transmembrane segment spans residues 13 to 37 (RVVLIPFFVLAFYLPFVWAPMVCAI). Over 38–60 (IFVFAAATDWFDGFLARRWKQTT) the chain is Periplasmic. A helical membrane pass occupies residues 61–81 (RFGAFLDPVADKVMVAVALVL). The Cytoplasmic segment spans residues 82–86 (VAEHY). A helical transmembrane segment spans residues 87–107 (HSWWITLPAATMIAREIIISS). The Periplasmic segment spans residues 108–145 (LREWMAEIGKRSSVAVSWVGKVKTMAQMGSLVGLLWRP). A helical membrane pass occupies residues 146 to 168 (DHNVELASFVLLYIAAVLTFWSM). Over 169 to 181 (FQYLNAAWSDLLE) the chain is Cytoplasmic.

It belongs to the CDP-alcohol phosphatidyltransferase class-I family.

Its subcellular location is the cell inner membrane. It catalyses the reaction a CDP-1,2-diacyl-sn-glycerol + sn-glycerol 3-phosphate = a 1,2-diacyl-sn-glycero-3-phospho-(1'-sn-glycero-3'-phosphate) + CMP + H(+). Its pathway is phospholipid metabolism; phosphatidylglycerol biosynthesis; phosphatidylglycerol from CDP-diacylglycerol: step 1/2. Functionally, catalyzes the conversion of cytidine diphosphate diacylglycerol (CDP-DG) and glycerol 3-phosphate into phosphatidylglycerol. Essential for the synthesis of anionic phospholipids, thereby playing a role in balancing the ratio of zwitterionic and anionic phospholipids, which is thought to be important for normal membrane function. The polypeptide is CDP-diacylglycerol--glycerol-3-phosphate 3-phosphatidyltransferase (Yersinia pestis bv. Antiqua (strain Antiqua)).